The primary structure comprises 367 residues: Cobalt-precorrin-5B C(1)-methyltransferase (367 aa).

Belongs to the CbiD family.

The catalysed reaction is Co-precorrin-5B + S-adenosyl-L-methionine = Co-precorrin-6A + S-adenosyl-L-homocysteine. The protein operates within cofactor biosynthesis; adenosylcobalamin biosynthesis; cob(II)yrinate a,c-diamide from sirohydrochlorin (anaerobic route): step 6/10. Catalyzes the methylation of C-1 in cobalt-precorrin-5B to form cobalt-precorrin-6A. This is Cobalt-precorrin-5B C(1)-methyltransferase from Priestia megaterium (Bacillus megaterium).